Here is a 402-residue protein sequence, read N- to C-terminus: Phosphoglycerate kinase (402 aa).

Residues 24–26 (DFN), Arg40, 63–66 (HFGR), Arg122, and Arg155 contribute to the substrate site. ATP is bound by residues Lys206, Gly297, Glu328, and 357–360 (GGDS).

Belongs to the phosphoglycerate kinase family. In terms of assembly, monomer.

The protein resides in the cytoplasm. It carries out the reaction (2R)-3-phosphoglycerate + ATP = (2R)-3-phospho-glyceroyl phosphate + ADP. Its pathway is carbohydrate degradation; glycolysis; pyruvate from D-glyceraldehyde 3-phosphate: step 2/5. This is Phosphoglycerate kinase from Synechococcus sp. (strain WH7803).